The chain runs to 406 residues: MKRAFILVLDSFGIGATADAKEFGDVGSDTLGHIADQCEQGLANNDQRQGALRLPNLSKLGLAMAHKESTGRFAPGLDADAEIIGAYGHAAELSSGKDTPSGHWEIAGVPVLFEWGYFTDKANSFPKELTDRILARAGIDGFLGNCHASGTQVLDDLGEEHMKTGQPIFYTSADSVFQIACHEETFGLDRLLELCQIAREELADYNIGRVIARPFIGPGKGQFERTGNRRDLSVEPPSATVLQKLAEEKQGQVVSIGKIADIYANCGITKKVKATGIPALFEATLEQIKQAGDNTIVFTNFVDFDSAYGHRRDVAGYAAALEYFDGRIHEVMELMQEDDILILTADHGCDPTWPGTDHTREHIPVLVYGQKVPAGSLGRRETFADIGQTLASYFGTSPMDYGKNFL.

Residues D10, D305, H310, D346, H347, and H358 each contribute to the Mn(2+) site.

The protein belongs to the phosphopentomutase family. Mn(2+) serves as cofactor.

It localises to the cytoplasm. It catalyses the reaction 2-deoxy-alpha-D-ribose 1-phosphate = 2-deoxy-D-ribose 5-phosphate. It carries out the reaction alpha-D-ribose 1-phosphate = D-ribose 5-phosphate. It functions in the pathway carbohydrate degradation; 2-deoxy-D-ribose 1-phosphate degradation; D-glyceraldehyde 3-phosphate and acetaldehyde from 2-deoxy-alpha-D-ribose 1-phosphate: step 1/2. Its function is as follows. Isomerase that catalyzes the conversion of deoxy-ribose 1-phosphate (dRib-1-P) and ribose 1-phosphate (Rib-1-P) to deoxy-ribose 5-phosphate (dRib-5-P) and ribose 5-phosphate (Rib-5-P), respectively. In Vibrio vulnificus (strain CMCP6), this protein is Phosphopentomutase.